The sequence spans 495 residues: Cytochrome P450 monooxygenase 113 (495 aa).

A helical membrane pass occupies residues 2–22 (FLQIAACFTVIGLLYGLVSNL). Cys-428 provides a ligand contact to heme.

It belongs to the cytochrome P450 family. Heme serves as cofactor.

It is found in the membrane. It participates in secondary metabolite biosynthesis. Functionally, cytochrome P450 monooxygenase that is able to use 4-ethoxybenzoic acid as a substrate for oxidation. The chain is Cytochrome P450 monooxygenase 113 from Postia placenta (strain ATCC 44394 / Madison 698-R) (Brown rot fungus).